A 159-amino-acid chain; its full sequence is Transcriptional repressor NrdR (159 aa).

The segment at 3–34 (CPFCRHEDTQVVDSRVSEDGAAIRRRRRCSAC) is a zinc-finger region. The 91-residue stretch at 49–139 (PAVVKKDGSR…VYRRFEDVSE (91 aa)) folds into the ATP-cone domain.

This sequence belongs to the NrdR family. The cofactor is Zn(2+).

Functionally, negatively regulates transcription of bacterial ribonucleotide reductase nrd genes and operons by binding to NrdR-boxes. In Burkholderia vietnamiensis (strain G4 / LMG 22486) (Burkholderia cepacia (strain R1808)), this protein is Transcriptional repressor NrdR.